The following is a 34-amino-acid chain: ISCTGSKQCYDPCKKKTGCPNAKCMNKSCXCYGC.

Intrachain disulfides connect Cys3–Cys24, Cys9–Cys29, Cys13–Cys31, and Cys19–Cys34. A Cysteine amide modification is found at Cys34.

Post-translationally, contains 4 disulfide bonds. In terms of tissue distribution, expressed by the venom gland.

It is found in the secreted. Its function is as follows. Binds to voltage-gated potassium channels Kv1.3/KCNA3 (IC(50)=0.48 uM) and Kv1.1/KCNA1 (IC(50)=6.7 uM) and inhibits channel activity. This is Potassium channel toxin alpha-KTx 6 hetlaxin from Heterometrus laoticus (Thai giant scorpion).